We begin with the raw amino-acid sequence, 647 residues long: Bifunctional enzyme CysN/CysC (647 aa).

The interval 1–472 (MSHQSDLIAT…TEERAARFGQ (472 aa)) is sulfate adenylyltransferase. In terms of domain architecture, tr-type G spans 22-239 (KQLLRFITCG…LETVYIGSDR (218 aa)). Residues 31–38 (GSVDDGKS) form a G1 region. 31-38 (GSVDDGKS) lines the GTP pocket. Residues 89–93 (GITID) form a G2 region. Residues 110-113 (DTPG) form a G3 region. GTP-binding positions include 110–114 (DTPGH) and 165–168 (NKMD). A G4 region spans residues 165–168 (NKMD). The interval 204–206 (SAL) is G5. The segment at 473–614 (KPATVLLTGL…FPGVTAKYDV (142 aa)) is adenylyl-sulfate kinase. 481 to 488 (GLTGSGKT) provides a ligand contact to ATP.

In the C-terminal section; belongs to the APS kinase family. It in the N-terminal section; belongs to the TRAFAC class translation factor GTPase superfamily. Classic translation factor GTPase family. CysN/NodQ subfamily. Heterodimer composed of CysD, the smaller subunit, and CysNC.

The enzyme catalyses sulfate + ATP + H(+) = adenosine 5'-phosphosulfate + diphosphate. The catalysed reaction is adenosine 5'-phosphosulfate + ATP = 3'-phosphoadenylyl sulfate + ADP + H(+). It functions in the pathway sulfur metabolism; hydrogen sulfide biosynthesis; sulfite from sulfate: step 1/3. The protein operates within sulfur metabolism; hydrogen sulfide biosynthesis; sulfite from sulfate: step 2/3. In terms of biological role, with CysD forms the ATP sulfurylase (ATPS) that catalyzes the adenylation of sulfate producing adenosine 5'-phosphosulfate (APS) and diphosphate, the first enzymatic step in sulfur assimilation pathway. APS synthesis involves the formation of a high-energy phosphoric-sulfuric acid anhydride bond driven by GTP hydrolysis by CysN coupled to ATP hydrolysis by CysD. Functionally, APS kinase catalyzes the synthesis of activated sulfate. The polypeptide is Bifunctional enzyme CysN/CysC (cysNC) (Rhodopirellula baltica (strain DSM 10527 / NCIMB 13988 / SH1)).